The following is a 113-amino-acid chain: Iron-sulfur cluster insertion protein ErpA (113 aa).

Residues cysteine 41, cysteine 105, and cysteine 107 each contribute to the iron-sulfur cluster site.

This sequence belongs to the HesB/IscA family. In terms of assembly, homodimer. The cofactor is iron-sulfur cluster.

Its function is as follows. Required for insertion of 4Fe-4S clusters for at least IspG. In Colwellia psychrerythraea (strain 34H / ATCC BAA-681) (Vibrio psychroerythus), this protein is Iron-sulfur cluster insertion protein ErpA.